Consider the following 234-residue polypeptide: Large ribosomal subunit protein uL1 (234 aa).

It belongs to the universal ribosomal protein uL1 family. In terms of assembly, part of the 50S ribosomal subunit.

Binds directly to 23S rRNA. The L1 stalk is quite mobile in the ribosome, and is involved in E site tRNA release. Its function is as follows. Protein L1 is also a translational repressor protein, it controls the translation of the L11 operon by binding to its mRNA. This chain is Large ribosomal subunit protein uL1, found in Psychromonas ingrahamii (strain DSM 17664 / CCUG 51855 / 37).